Reading from the N-terminus, the 88-residue chain is Elongation factor 1-beta (88 aa).

This sequence belongs to the EF-1-beta/EF-1-delta family.

Its function is as follows. Promotes the exchange of GDP for GTP in EF-1-alpha/GDP, thus allowing the regeneration of EF-1-alpha/GTP that could then be used to form the ternary complex EF-1-alpha/GTP/AAtRNA. This Thermoplasma volcanium (strain ATCC 51530 / DSM 4299 / JCM 9571 / NBRC 15438 / GSS1) protein is Elongation factor 1-beta (ef1b).